Here is an 882-residue protein sequence, read N- to C-terminus: E3 ubiquitin-protein ligase SH3RF3 (882 aa).

A disordered region spans residues 18 to 42; that stretch reads AQSEGDEDRPGERRRRRAAATAAGA. The segment at 57 to 98 adopts an RING-type zinc-finger fold; sequence CSVCLERLDTTAKVLPCQHTFCRRCLESIVCSRHELRCPECR. A disordered region spans residues 124 to 159; the sequence is RPRAGTSPGGSPPARPIPGQSAAPTLAGGGGGAAGS. SH3 domains follow at residues 194–253 and 256–319; these read CLLP…CIQP and HAPP…LNDS. The tract at residues 368–399 is disordered; it reads RRVDGKKNTKKRHSFTALSVTHRSSQAASHRH. Residues 369-439 form an interaction with RAC1 region; the sequence is RVDGKKNTKK…APTQDVSSSA (71 aa). The residue at position 400 (serine 400) is a Phosphoserine. Polar residues predominate over residues 433–444; sequence QDVSSSAGSTPT. A disordered region spans residues 433 to 458; that stretch reads QDVSSSAGSTPTAVPRAASVSGEQGT. The SH3 3 domain occupies 464–525; it reads LPLNVYLALY…PGNYVTPVSR (62 aa). 3 stretches are compositionally biased toward polar residues: residues 575–588, 596–635, and 697–706; these read PQAH…SPPT, AQPT…NSPS, and LSTSSPTNTG. 2 disordered regions span residues 575-664 and 693-747; these read PQAH…CPRP and PIGV…PTHD. Positions 708-721 are enriched in basic and acidic residues; the sequence is KLDEKKSEKKEKKS. Residue serine 797 is modified to Phosphoserine. One can recognise an SH3 4 domain in the interval 823–882; the sequence is LPRERYRVVVSYPPQSEAEIELKEGDIVFVHKKREDGWYKGTLQRNGRTGLFPGSFVESF.

This sequence belongs to the SH3RF family. In terms of assembly, interacts (via SH3 domain 3) with PAK2. Interacts with RAC1 (GTP-bound form). Autoubiquitinated.

It catalyses the reaction S-ubiquitinyl-[E2 ubiquitin-conjugating enzyme]-L-cysteine + [acceptor protein]-L-lysine = [E2 ubiquitin-conjugating enzyme]-L-cysteine + N(6)-ubiquitinyl-[acceptor protein]-L-lysine.. The protein operates within protein modification; protein ubiquitination. Functionally, has E3 ubiquitin-protein ligase activity. The protein is E3 ubiquitin-protein ligase SH3RF3 (SH3RF3) of Homo sapiens (Human).